A 284-amino-acid chain; its full sequence is Insulin-like growth factor-binding protein 2 (284 aa).

Residues 1–21 (MGLSRYLLGLLLGVLCTPAPA) form the signal peptide. The region spanning 23–106 (VLFRCPPCSP…VLGLGTCGKR (84 aa)) is the IGFBP N-terminal domain. Intrachain disulfides connect Cys-27–Cys-56, Cys-30–Cys-58, Cys-38–Cys-59, Cys-47–Cys-62, Cys-70–Cys-83, and Cys-77–Cys-103. The segment at 108 to 184 (DTEYGSSQER…KSEDKKRPAR (77 aa)) is disordered. A compositionally biased stretch (basic and acidic residues) spans 117–127 (RGTELPEERSD). Residues 136 to 145 (EAGPAVAGEA) show a composition bias toward low complexity. The span at 152 to 180 (KKEMKEIAVTRERANEQQRSKSNKSEDKK) shows a compositional bias: basic and acidic residues. The region spanning 184 to 266 (RSLCQLQLDQ…SPTIRGDPEC (83 aa)) is the Thyroglobulin type-1 domain. 3 cysteine pairs are disulfide-bonded: Cys-187–Cys-221, Cys-232–Cys-243, and Cys-245–Cys-266. The Cell attachment site motif lies at 261–263 (RGD).

Interacts with igf1 and igf2.

The protein localises to the secreted. Functionally, IGF-binding proteins prolong the half-life of the IGFs and have been shown to either inhibit or stimulate the growth promoting effects of the IGFs on cell culture. They alter the interaction of IGFs with their cell surface receptors. The polypeptide is Insulin-like growth factor-binding protein 2 (Xenopus tropicalis (Western clawed frog)).